Reading from the N-terminus, the 310-residue chain is tRNA dimethylallyltransferase (310 aa).

Residue 14–21 (GPTASGKS) participates in ATP binding. 16-21 (TASGKS) provides a ligand contact to substrate. 2 interaction with substrate tRNA regions span residues 39–42 (DSMQ) and 163–167 (QRIVR).

It belongs to the IPP transferase family. In terms of assembly, monomer. Requires Mg(2+) as cofactor.

It carries out the reaction adenosine(37) in tRNA + dimethylallyl diphosphate = N(6)-dimethylallyladenosine(37) in tRNA + diphosphate. In terms of biological role, catalyzes the transfer of a dimethylallyl group onto the adenine at position 37 in tRNAs that read codons beginning with uridine, leading to the formation of N6-(dimethylallyl)adenosine (i(6)A). This Brucella melitensis biotype 2 (strain ATCC 23457) protein is tRNA dimethylallyltransferase.